Consider the following 139-residue polypeptide: Peptide methionine sulfoxide reductase MsrB (139 aa).

In terms of domain architecture, MsrB spans 8–130; that stretch reads DREWQRELSP…NSASLQLKTQ (123 aa). Positions 47, 50, 96, and 99 each coordinate Zn(2+). The active-site Nucleophile is C119.

This sequence belongs to the MsrB Met sulfoxide reductase family. The cofactor is Zn(2+).

It catalyses the reaction L-methionyl-[protein] + [thioredoxin]-disulfide + H2O = L-methionyl-(R)-S-oxide-[protein] + [thioredoxin]-dithiol. In Acinetobacter baumannii (strain SDF), this protein is Peptide methionine sulfoxide reductase MsrB.